A 1758-amino-acid chain; its full sequence is Collagen alpha-2(IV) chain (1758 aa).

The first 26 residues, 1–26 (MKQRAALGPVLRLAILALLAVSYVQS), serve as a signal peptide directing secretion. Residues 27–42 (QATCRDCSNRGCFCVG) form a 7S domain region. A triple-helical region region spans residues 42-1527 (GEKGSMGAPG…PGAPGAAGPA (1486 aa)). The segment covering 47–62 (MGAPGPQGPPGTQGIR) has biased composition (low complexity). Disordered regions lie at residues 47–943 (MGAP…GAPG), 955–1304 (GVPG…GLPG), 1316–1339 (GFPG…DGLP), and 1367–1525 (GFPG…GAAG). A compositionally biased stretch (gly residues) spans 102–111 (GNDGGNGRPG). A compositionally biased stretch (pro residues) spans 134–149 (PGRPGPPGMPGFPGPP). The span at 189–198 (YPGEKGDRGD) shows a compositional bias: basic and acidic residues. Over residues 224–234 (PKGDPGDLGSV) the composition is skewed to low complexity. The O-linked (Xyl...) (glycosaminoglycan) serine glycan is linked to Ser248. Basic and acidic residues predominate over residues 258–267 (PGEKGDKGEP). Residues 268-283 (GEGGQRGYPGNGGLSG) show a composition bias toward gly residues. Positions 367 to 382 (PGPPGLPGRPGNPGPP) are enriched in pro residues. Residues 398 to 407 (GNTGGPGLPG) show a composition bias toward gly residues. Composition is skewed to low complexity over residues 408–417 (YPGNEGLPGP) and 429–439 (APGVSGPSGIP). Residues 464–479 (KDGKPGLDGAPGRKGE) are compositionally biased toward basic and acidic residues. 2 stretches are compositionally biased toward low complexity: residues 495-509 (GLPG…PGPN) and 568-584 (PVGD…AGRP). A compositionally biased stretch (pro residues) spans 638-648 (PSGPVGPPGAP). Composition is skewed to gly residues over residues 693–702 (GAKGDGGLPG), 737–746 (GTKGEGGYPG), and 782–791 (GDKGFGGVPG). The span at 839 to 858 (LPGLPGTPGLEGQRGFPGAP) shows a compositional bias: low complexity. The segment covering 859-868 (GLKGGDGLPG) has biased composition (gly residues). The span at 929-938 (APGQSGAPGL) shows a compositional bias: low complexity. The segment covering 958-967 (GFKGDGGLPG) has biased composition (gly residues). Residues 968-980 (LPGLNGPKGEPGV) show a composition bias toward low complexity. Gly residues predominate over residues 988 to 997 (GMKGNGGLPG). Residues 1040 to 1056 (LPGQPGLRGPQGPSGLP) show a composition bias toward low complexity. Positions 1194-1203 (GLPGLGGEKG) are enriched in gly residues. Residues 1237 to 1250 (FPGQPGQEGLPGLS) show a composition bias toward low complexity. Positions 1251 to 1260 (GEKGMGGLPG) are enriched in gly residues. A compositionally biased stretch (gly residues) spans 1373–1382 (GLKGEGGLPG). Composition is skewed to low complexity over residues 1413-1425 (LPGR…ADGP) and 1433-1454 (GPQN…APGL). 2 stretches are compositionally biased toward gly residues: residues 1492 to 1501 (GEKGMGGLPG) and 1507 to 1516 (GQPGGPGAPG). The region spanning 1531-1754 (GFVLVKHSQT…SRCQVCVKST (224 aa)) is the Collagen IV NC1 domain. 6 disulfides stabilise this stretch: Cys1546/Cys1635, Cys1579/Cys1632, Cys1591/Cys1597, Cys1654/Cys1750, Cys1688/Cys1747, and Cys1700/Cys1707.

It belongs to the type IV collagen family. As to quaternary structure, trimers of two alpha 1(IV) and one alpha 2(IV) chain. Type IV collagen forms a mesh-like network linked through intermolecular interactions between 7S domains and between NC1 domains. In terms of processing, prolines at the third position of the tripeptide repeating unit (G-X-Y) are hydroxylated in some or all of the chains. Post-translationally, type IV collagens contain numerous cysteine residues which are involved in inter- and intramolecular disulfide bonding. 12 of these, located in the NC1 domain, are conserved in all known type IV collagens. The trimeric structure of the NC1 domains is stabilized by covalent bonds between Lys and Met residues. As to expression, localizes to the basement membrane between distal tip cells and the germline. Localizes to the intestinal basement membrane.

The protein localises to the secreted. It localises to the extracellular space. It is found in the extracellular matrix. Its subcellular location is the basement membrane. Its function is as follows. Collagen type IV is specific for basement membranes. Together with fbl-1 and downstream of metalloprotease mig-17, recruits nidogen nid-1 to the gonad basement membrane thereby probably inducing basement membrane remodeling required for the directional migration of distal tip cells. Required to restrict presynaptic growth at the neuromuscular junctions in late larval stage and in adult motor neurons. Vital for embryonic development. This is Collagen alpha-2(IV) chain from Caenorhabditis elegans.